A 378-amino-acid polypeptide reads, in one-letter code: Dual-specificity RNA methyltransferase RlmN (378 aa).

Catalysis depends on Glu-95, which acts as the Proton acceptor. The 245-residue stretch at 101–345 (EETRGTLCVS…TTIRKTRGDD (245 aa)) folds into the Radical SAM core domain. Cys-108 and Cys-350 form a disulfide bridge. Positions 115, 119, and 122 each coordinate [4Fe-4S] cluster. S-adenosyl-L-methionine is bound by residues 176–177 (GE), Ser-208, 230–232 (SLH), and Asn-307. Cys-350 acts as the S-methylcysteine intermediate in catalysis.

Belongs to the radical SAM superfamily. RlmN family. Requires [4Fe-4S] cluster as cofactor.

The protein resides in the cytoplasm. The catalysed reaction is adenosine(2503) in 23S rRNA + 2 reduced [2Fe-2S]-[ferredoxin] + 2 S-adenosyl-L-methionine = 2-methyladenosine(2503) in 23S rRNA + 5'-deoxyadenosine + L-methionine + 2 oxidized [2Fe-2S]-[ferredoxin] + S-adenosyl-L-homocysteine. The enzyme catalyses adenosine(37) in tRNA + 2 reduced [2Fe-2S]-[ferredoxin] + 2 S-adenosyl-L-methionine = 2-methyladenosine(37) in tRNA + 5'-deoxyadenosine + L-methionine + 2 oxidized [2Fe-2S]-[ferredoxin] + S-adenosyl-L-homocysteine. Specifically methylates position 2 of adenine 2503 in 23S rRNA and position 2 of adenine 37 in tRNAs. m2A2503 modification seems to play a crucial role in the proofreading step occurring at the peptidyl transferase center and thus would serve to optimize ribosomal fidelity. The protein is Dual-specificity RNA methyltransferase RlmN of Burkholderia thailandensis (strain ATCC 700388 / DSM 13276 / CCUG 48851 / CIP 106301 / E264).